The chain runs to 21 residues: Buforin-2 (21 aa).

At K21 the chain carries N6-(2-hydroxyisobutyryl)lysine; alternate.

The protein belongs to the histone H2A family. In terms of tissue distribution, expressed by the skin glands.

The protein localises to the secreted. Antimicrobial peptide with potent activity against some Gram-positive and Gram-negative bacteria. Does not permeabilize membrane, but internalizes into bacterial cells and alter specific gene expression involved in bacterial resistance mechanisms. Has the ability to agglutinate E.coli, and lipid vesicles. Shows a weak hemolytic activity, and is not cytotoxic to monocytes. This is Buforin-2 from Sphaenorhynchus lacteus (Orinoco lime treefrog).